Reading from the N-terminus, the 357-residue chain is Prostaglandin D2 receptor-like (357 aa).

The Extracellular segment spans residues 1-20; the sequence is MNESYRCQAATWVERGSSAT. A glycan (N-linked (GlcNAc...) asparagine) is linked at Asn2. A helical membrane pass occupies residues 21 to 41; the sequence is MGGVLFSAGLLGNLLALVLLA. At 42 to 57 the chain is on the cytoplasmic side; the sequence is RSGLGSCRPGPLHPPP. The chain crosses the membrane as a helical span at residues 58 to 78; the sequence is SVFYVLVCGLTVTHLLGKCLI. The Extracellular portion of the chain corresponds to 79 to 106; that stretch reads SPMVLAAYAQNRSLKELLPASGNQLCEA. An N-linked (GlcNAc...) asparagine glycan is attached at Asn89. An intrachain disulfide couples Cys104 to Cys182. A helical membrane pass occupies residues 107–127; that stretch reads FAFLMSFFGLASTLQLLAMAL. Residues 128 to 149 are Cytoplasmic-facing; sequence ECWLSLGHPFFYQRHITARRGV. The chain crosses the membrane as a helical span at residues 150–170; it reads LVAPVAGAFSLAFCALPFAGF. Topologically, residues 171 to 194 are extracellular; the sequence is GKFVQYCPGTWCFIQMIHKKRSFS. A helical transmembrane segment spans residues 195 to 215; that stretch reads VIGFSVLYSSLMALLVLATVV. Residues 216–261 are Cytoplasmic-facing; sequence CNLGAMSNLYAMHRRQRHHPRRCSRDRAQSGSDYRHGSPNPLEELD. Residues 262-282 form a helical membrane-spanning segment; it reads HFVLLALTTVLFTMCSLPLIY. The Extracellular segment spans residues 283–306; the sequence is RAYYGAFKLVDRADGDSEDLQALR. A helical transmembrane segment spans residues 307–327; the sequence is FLSVISIVDPWIFIIFRTSVF. Over 328–357 the chain is Cytoplasmic; that stretch reads RMLFHKAFTRPLIYRNWCSHSWQTNMESTL.

Belongs to the G-protein coupled receptor 1 family. As to expression, strongly expressed in eye and gastrointestinal tract (GIT), moderately in the brain and oviduct and weakly in the epididymis. In the eye, expressed in the epithelium of the iris and ciliary body and in photoreceptor cells of the retina. In the brain, expressed in leptomeninges, choroid plexus and spinal cord (sensory and motor neurons of the dorsal and ventral horns). In the stomach, expressed in the mucous-secreting goblet cells and the columnar epithelium. Expressed in platelets.

It localises to the cell membrane. Functionally, receptor for prostaglandin D2 (PGD2). The activity of this receptor is mainly mediated by G(s) proteins that stimulate adenylate cyclase, resulting in an elevation of intracellular cAMP. A mobilization of calcium is also observed, but without formation of inositol 1,4,5-trisphosphate. The protein is Prostaglandin D2 receptor-like (Ptgdrl) of Rattus norvegicus (Rat).